We begin with the raw amino-acid sequence, 361 residues long: Peptide chain release factor 1 (361 aa).

N5-methylglutamine is present on Q237. A compositionally biased stretch (basic and acidic residues) spans 285–296; sequence DEKRRSAEESTR. The disordered stretch occupies residues 285 to 305; the sequence is DEKRRSAEESTRRNLVGSGDR.

It belongs to the prokaryotic/mitochondrial release factor family. Methylated by PrmC. Methylation increases the termination efficiency of RF1.

It is found in the cytoplasm. In terms of biological role, peptide chain release factor 1 directs the termination of translation in response to the peptide chain termination codons UAG and UAA. The chain is Peptide chain release factor 1 from Shewanella sediminis (strain HAW-EB3).